We begin with the raw amino-acid sequence, 614 residues long: Glutamine--fructose-6-phosphate aminotransferase [isomerizing] (614 aa).

The active-site Nucleophile; for GATase activity is the cysteine 2. Residues 2–221 form the Glutamine amidotransferase type-2 domain; the sequence is CGIVGYIGKR…DGEIAVINRG (220 aa). SIS domains are found at residues 291 to 430 and 463 to 604; these read YKEK…EKGT and LSKT…VDQP. The active-site For Fru-6P isomerization activity is lysine 609.

As to quaternary structure, homodimer.

It localises to the cytoplasm. It catalyses the reaction D-fructose 6-phosphate + L-glutamine = D-glucosamine 6-phosphate + L-glutamate. Catalyzes the first step in hexosamine metabolism, converting fructose-6P into glucosamine-6P using glutamine as a nitrogen source. This Bacteroides thetaiotaomicron (strain ATCC 29148 / DSM 2079 / JCM 5827 / CCUG 10774 / NCTC 10582 / VPI-5482 / E50) protein is Glutamine--fructose-6-phosphate aminotransferase [isomerizing].